We begin with the raw amino-acid sequence, 327 residues long: MSERIAVIGSGAFGTALAAVIALAGRSPVILVGRNPSLVADLKAERLHDAVLPGIALPESLEFSAEAEAIAGASIVLFAMPSQAQADAARQYGPYLSKDAVVVTCAKGIERTTGNLLTDMLERELPDHPVAVLSGPGFAADIAKGLPTAMAIAAADMETAERLAQAISGRTFRLYASDDRIGVQLGGALKNVLAIACGIVEGRGIGESARAALIARGLAEMSRFVVAKGGQADTVRGLSGLGDLVLTGTSHQSRNLRFGIALGRGEKADPLQGALVEGALAASVASRLAAALSISMPITDAVSAIIDGRLEIADAIEQLMTRPITTE.

NADPH-binding residues include Phe-13, Arg-34, and Lys-107. Residues Lys-107 and Gly-135 each coordinate sn-glycerol 3-phosphate. An NADPH-binding site is contributed by Ala-139. 5 residues coordinate sn-glycerol 3-phosphate: Lys-190, Asp-243, Ser-253, Arg-254, and Asn-255. Lys-190 acts as the Proton acceptor in catalysis. Residue Arg-254 coordinates NADPH. Residues Val-276 and Glu-277 each contribute to the NADPH site.

It belongs to the NAD-dependent glycerol-3-phosphate dehydrogenase family.

It is found in the cytoplasm. It carries out the reaction sn-glycerol 3-phosphate + NAD(+) = dihydroxyacetone phosphate + NADH + H(+). The enzyme catalyses sn-glycerol 3-phosphate + NADP(+) = dihydroxyacetone phosphate + NADPH + H(+). It participates in membrane lipid metabolism; glycerophospholipid metabolism. Functionally, catalyzes the reduction of the glycolytic intermediate dihydroxyacetone phosphate (DHAP) to sn-glycerol 3-phosphate (G3P), the key precursor for phospholipid synthesis. This Rhizobium etli (strain CIAT 652) protein is Glycerol-3-phosphate dehydrogenase [NAD(P)+].